The chain runs to 116 residues: Thioredoxin H-type (116 aa).

A Thioredoxin domain is found at Ala-2–Thr-115. Active-site nucleophile residues include Cys-39 and Cys-42. Cysteines 39 and 42 form a disulfide.

This sequence belongs to the thioredoxin family. Plant H-type subfamily.

It localises to the cytoplasm. In terms of biological role, participates in various redox reactions through the reversible oxidation of the active center dithiol to a disulfide. The H form is known to activate a number of cytosolic enzymes. This chain is Thioredoxin H-type, found in Fagopyrum esculentum (Common buckwheat).